The sequence spans 520 residues: Putative cytochrome P450 CYP13A4 (520 aa).

Cys464 is a binding site for heme.

It belongs to the cytochrome P450 family. Heme serves as cofactor.

Cytochromes P450 are a group of heme-thiolate monooxygenases. They oxidize a variety of structurally unrelated compounds, including steroids, fatty acids, and xenobiotics. The polypeptide is Putative cytochrome P450 CYP13A4 (cyp-13A4) (Caenorhabditis elegans).